A 131-amino-acid polypeptide reads, in one-letter code: Cell cycle protein GpsB (131 aa).

Residues 39-76 are a coiled coil; sequence LDGIIRDYEAFTNEIDRLKEENTKLFSRVDELTKQLSV. The interval 111–131 is disordered; it reads KLSDSSVDNHDDGNHSDVDQY. The span at 117 to 131 shows a compositional bias: basic and acidic residues; the sequence is VDNHDDGNHSDVDQY.

It belongs to the GpsB family. Forms polymers through the coiled coil domains. Interacts with PBP1, MreC and EzrA.

The protein resides in the cytoplasm. In terms of biological role, divisome component that associates with the complex late in its assembly, after the Z-ring is formed, and is dependent on DivIC and PBP2B for its recruitment to the divisome. Together with EzrA, is a key component of the system that regulates PBP1 localization during cell cycle progression. Its main role could be the removal of PBP1 from the cell pole after pole maturation is completed. Also contributes to the recruitment of PBP1 to the division complex. Not essential for septum formation. In Lacticaseibacillus casei (strain BL23) (Lactobacillus casei), this protein is Cell cycle protein GpsB.